The sequence spans 140 residues: Large ribosomal subunit protein uL16 (140 aa).

The segment at methionine 1–arginine 24 is disordered.

This sequence belongs to the universal ribosomal protein uL16 family. As to quaternary structure, part of the 50S ribosomal subunit.

Functionally, binds 23S rRNA and is also seen to make contacts with the A and possibly P site tRNAs. In Opitutus terrae (strain DSM 11246 / JCM 15787 / PB90-1), this protein is Large ribosomal subunit protein uL16.